The sequence spans 136 residues: Aspartate 1-decarboxylase (136 aa).

Catalysis depends on serine 25, which acts as the Schiff-base intermediate with substrate; via pyruvic acid. Serine 25 is subject to Pyruvic acid (Ser). Residue threonine 57 coordinates substrate. The active-site Proton donor is the tyrosine 58. 73–75 (GAA) provides a ligand contact to substrate.

The protein belongs to the PanD family. As to quaternary structure, heterooctamer of four alpha and four beta subunits. Requires pyruvate as cofactor. In terms of processing, is synthesized initially as an inactive proenzyme, which is activated by self-cleavage at a specific serine bond to produce a beta-subunit with a hydroxyl group at its C-terminus and an alpha-subunit with a pyruvoyl group at its N-terminus.

It localises to the cytoplasm. It carries out the reaction L-aspartate + H(+) = beta-alanine + CO2. It functions in the pathway cofactor biosynthesis; (R)-pantothenate biosynthesis; beta-alanine from L-aspartate: step 1/1. In terms of biological role, catalyzes the pyruvoyl-dependent decarboxylation of aspartate to produce beta-alanine. The sequence is that of Aspartate 1-decarboxylase from Mycolicibacterium smegmatis (strain ATCC 700084 / mc(2)155) (Mycobacterium smegmatis).